The following is a 161-amino-acid chain: Cell cycle link protein (161 aa).

Residues 9–21 form a binding to host SKP1 protein region; the sequence is MPDDVKREIKEIY. An LXCXE motif, interaction with host RBR motif is present at residues 111–115; sequence LYCDE.

As to quaternary structure, interacts with host SKP1. Interacts (via LXCXE domain) with host retinoblastoma-related protein 2 (RBR2). Interacts (via LXCXE domain) with human RB1. Interacts (via LXCXE domain) with retinoblastoma-related proteins (RBR).

Interacts with and disrupts the function of host retinoblastoma-related proteins RBR, which are key regulators of the cell cycle. Induces transcriptional activation of E2F-regulated S-phase and G2/M-phase-specific genes. Inactivation of the ability of RBR to arrest the cell cycle leads to the stimulation of viral DNA replication. Acts as a suppressor of RNA-mediated gene silencing, also known as post-transcriptional gene silencing (PTGS), a mechanism of plant viral defense that limits the accumulation of viral RNAs. This Musa (BBTV) protein is Cell cycle link protein (DNA-C).